The primary structure comprises 365 residues: tRNA(Met) cytidine acetate ligase (365 aa).

Residues 7–20, glycine 96, asparagine 152, and arginine 175 contribute to the ATP site; that span reads IAEF…HKYL.

It belongs to the TmcAL family.

The protein resides in the cytoplasm. The enzyme catalyses cytidine(34) in elongator tRNA(Met) + acetate + ATP = N(4)-acetylcytidine(34) in elongator tRNA(Met) + AMP + diphosphate. In terms of biological role, catalyzes the formation of N(4)-acetylcytidine (ac(4)C) at the wobble position of elongator tRNA(Met), using acetate and ATP as substrates. First activates an acetate ion to form acetyladenylate (Ac-AMP) and then transfers the acetyl group to tRNA to form ac(4)C34. This chain is tRNA(Met) cytidine acetate ligase, found in Streptococcus pneumoniae (strain Taiwan19F-14).